The chain runs to 230 residues: Ubiquitin carboxyl-terminal hydrolase isozyme L3 (230 aa).

The UCH catalytic domain occupies 5–229 (RWLPLEANPE…LRFNAIALSA (225 aa)). Residues 8–13 (PLEANP) form an interaction with ubiquitin region. Cys-95 serves as the catalytic Nucleophile. The residue at position 130 (Ser-130) is a Phosphoserine. Residues 152 to 159 (AHEGQTEA) form an interaction with ubiquitin. Crossover loop which restricts access of large ubiquitin adducts to the active site region. His-169 serves as the catalytic Proton donor. The interval 219 to 224 (ELRFNA) is interaction with ubiquitin.

This sequence belongs to the peptidase C12 family. Preferentially binds diubiquitin; the interaction does not hydrolyze diubiquitin but, in vitro, inhibits the hydrolyzing activity on other substrates. Highly expressed in heart, skeletal muscle, and testis.

It is found in the cytoplasm. The enzyme catalyses Thiol-dependent hydrolysis of ester, thioester, amide, peptide and isopeptide bonds formed by the C-terminal Gly of ubiquitin (a 76-residue protein attached to proteins as an intracellular targeting signal).. Inhibited by monoubiquitin and diubiquitin. Its function is as follows. Deubiquitinating enzyme (DUB) that controls levels of cellular ubiquitin through processing of ubiquitin precursors and ubiquitinated proteins. Thiol protease that recognizes and hydrolyzes a peptide bond at the C-terminal glycine of either ubiquitin or NEDD8. Has a 10-fold preference for Arg and Lys at position P3'', and exhibits a preference towards 'Lys-48'-linked ubiquitin chains. Deubiquitinates ENAC in apical compartments, thereby regulating apical membrane recycling. Indirectly increases the phosphorylation of IGFIR, AKT and FOXO1 and promotes insulin-signaling and insulin-induced adipogenesis. Required for stress-response retinal, skeletal muscle and germ cell maintenance. May be involved in working memory. Can hydrolyze UBB(+1), a mutated form of ubiquitin which is not effectively degraded by the proteasome and is associated with neurogenerative disorders. The chain is Ubiquitin carboxyl-terminal hydrolase isozyme L3 (UCHL3) from Homo sapiens (Human).